The chain runs to 459 residues: Diaminopimelate decarboxylase (459 aa).

An N6-(pyridoxal phosphate)lysine modification is found at lysine 89. Residues glycine 271 and 313–316 (EPGR) contribute to the pyridoxal 5'-phosphate site. Substrate is bound by residues arginine 316, arginine 357, and tyrosine 361. The active-site Proton donor is the cysteine 388. Residues glutamate 389 and tyrosine 418 each contribute to the substrate site. A pyridoxal 5'-phosphate-binding site is contributed by tyrosine 418.

It belongs to the Orn/Lys/Arg decarboxylase class-II family. LysA subfamily. Homodimer. Pyridoxal 5'-phosphate is required as a cofactor.

The catalysed reaction is meso-2,6-diaminopimelate + H(+) = L-lysine + CO2. The protein operates within amino-acid biosynthesis; L-lysine biosynthesis via DAP pathway; L-lysine from DL-2,6-diaminopimelate: step 1/1. Its function is as follows. Specifically catalyzes the decarboxylation of meso-diaminopimelate (meso-DAP) to L-lysine. The sequence is that of Diaminopimelate decarboxylase from Corynebacterium efficiens (strain DSM 44549 / YS-314 / AJ 12310 / JCM 11189 / NBRC 100395).